Consider the following 572-residue polypeptide: Na(+)/citrate cotransporter (572 aa).

Helical transmembrane passes span 13–33, 53–73, 80–100, 124–144, 218–238, 255–275, 315–335, and 357–377; these read SFAILLFTPILMLPLVILIPD, VIPVAVTSLLPVLLFPLLKVL, IQYMKDTNMLFLGSLIVAVAV, LMLGFMFVTAFLSMWISNTAA, SASIGGTATLTGTGPNVVLLG, SWFGFAFPNMVMMLVLAWLWL, SLSYPECNVLFCFTLLVILWF, and HITDATVAIFVAILLFIIPSQ. The N-linked (GlcNAc...) asparagine glycan is linked to asparagine 382. A run of 4 helical transmembrane segments spans residues 410–430, 443–463, 491–511, and 532–552; these read VPWDIVLLLGGGFAMAKGCET, PLRLVKPAVITLILSCLVAMT, PLYVMIPCTMSASLAFMLPVA, and TGLIMNFVGILSVFLSVNTWG. N-linked (GlcNAc...) asparagine glycosylation is present at asparagine 566.

This sequence belongs to the SLC13A/DASS transporter (TC 2.A.47) family. NADC subfamily. Homodimer.

It localises to the cell membrane. It catalyses the reaction citrate(out) + 4 Na(+)(out) = citrate(in) + 4 Na(+)(in). With respect to regulation, inhibited by Li(+). In terms of biological role, high-affinity sodium/citrate cotransporter that mediates citrate entry into cells, which is a critical participant of biochemical pathways. May function in various metabolic processes in which citrate has a critical role such as energy production (Krebs cycle), fatty acid synthesis, cholesterol synthesis, glycolysis, and gluconeogenesis. Transports citrate into the cell in a Na(+)-dependent manner, recognizing the trivalent form of citrate (physiological pH) rather than the divalent form. Can recognizes succinate as a substrate, but its affinity for succinate is several fold lower than for citrate. The stoichiometry is probably 4 Na(+) for each carboxylate, irrespective of whether the translocated substrate is divalent or trivalent, rendering the process electrogenic. Involved in the regulation of citrate levels in the brain. This Mus musculus (Mouse) protein is Na(+)/citrate cotransporter (Slc13a5).